Consider the following 461-residue polypeptide: Bifunctional protein GlmU (461 aa).

The segment at 1–227 (MEVIALILAA…PDEVLGVNDR (227 aa)) is pyrophosphorylase. Residues 8-11 (LAAG), lysine 22, glutamine 73, 78-79 (GT), 100-102 (YGD), glycine 137, glutamate 152, asparagine 167, and asparagine 225 contribute to the UDP-N-acetyl-alpha-D-glucosamine site. Aspartate 102 contacts Mg(2+). Asparagine 225 is a Mg(2+) binding site. The segment at 228–248 (RQLAELERIYQVHQARALMER) is linker. Residues 249–461 (GVTLRDPARF…EKARKESCAE (213 aa)) form an N-acetyltransferase region. UDP-N-acetyl-alpha-D-glucosamine contacts are provided by arginine 332 and lysine 350. Residue histidine 362 is the Proton acceptor of the active site. UDP-N-acetyl-alpha-D-glucosamine contacts are provided by tyrosine 365 and asparagine 376. Acetyl-CoA-binding positions include alanine 379, 385 to 386 (NY), serine 404, alanine 422, and arginine 439.

It in the N-terminal section; belongs to the N-acetylglucosamine-1-phosphate uridyltransferase family. This sequence in the C-terminal section; belongs to the transferase hexapeptide repeat family. Homotrimer. Requires Mg(2+) as cofactor.

It is found in the cytoplasm. The catalysed reaction is alpha-D-glucosamine 1-phosphate + acetyl-CoA = N-acetyl-alpha-D-glucosamine 1-phosphate + CoA + H(+). It catalyses the reaction N-acetyl-alpha-D-glucosamine 1-phosphate + UTP + H(+) = UDP-N-acetyl-alpha-D-glucosamine + diphosphate. It functions in the pathway nucleotide-sugar biosynthesis; UDP-N-acetyl-alpha-D-glucosamine biosynthesis; N-acetyl-alpha-D-glucosamine 1-phosphate from alpha-D-glucosamine 6-phosphate (route II): step 2/2. The protein operates within nucleotide-sugar biosynthesis; UDP-N-acetyl-alpha-D-glucosamine biosynthesis; UDP-N-acetyl-alpha-D-glucosamine from N-acetyl-alpha-D-glucosamine 1-phosphate: step 1/1. Its pathway is bacterial outer membrane biogenesis; LPS lipid A biosynthesis. Functionally, catalyzes the last two sequential reactions in the de novo biosynthetic pathway for UDP-N-acetylglucosamine (UDP-GlcNAc). The C-terminal domain catalyzes the transfer of acetyl group from acetyl coenzyme A to glucosamine-1-phosphate (GlcN-1-P) to produce N-acetylglucosamine-1-phosphate (GlcNAc-1-P), which is converted into UDP-GlcNAc by the transfer of uridine 5-monophosphate (from uridine 5-triphosphate), a reaction catalyzed by the N-terminal domain. In Methylococcus capsulatus (strain ATCC 33009 / NCIMB 11132 / Bath), this protein is Bifunctional protein GlmU.